A 692-amino-acid polypeptide reads, in one-letter code: Elongation factor G (692 aa).

The tr-type G domain occupies 8–282; that stretch reads KDYRNIGIMA…AVVDYLPSPL (275 aa). Residues 17–24, 81–85, and 135–138 each bind GTP; these read AHIDAGKT, DTPGH, and NKMD.

Belongs to the TRAFAC class translation factor GTPase superfamily. Classic translation factor GTPase family. EF-G/EF-2 subfamily.

It is found in the cytoplasm. Catalyzes the GTP-dependent ribosomal translocation step during translation elongation. During this step, the ribosome changes from the pre-translocational (PRE) to the post-translocational (POST) state as the newly formed A-site-bound peptidyl-tRNA and P-site-bound deacylated tRNA move to the P and E sites, respectively. Catalyzes the coordinated movement of the two tRNA molecules, the mRNA and conformational changes in the ribosome. The polypeptide is Elongation factor G (fusA) (Mycoplasmopsis pulmonis (strain UAB CTIP) (Mycoplasma pulmonis)).